The chain runs to 84 residues: uncharacterized protein (84 aa).

A helical membrane pass occupies residues 10-32; it reads AFSLAYYIIIHLLCLSYIYEIIH.

The protein localises to the membrane. This is an uncharacterized protein from Saccharomyces cerevisiae (strain ATCC 204508 / S288c) (Baker's yeast).